The sequence spans 522 residues: MENIEKLLMQEKILMLELDLVRAKISLARANGSSQQGELSLHRETPEKEVAVHSALVTFTPTQVKAIPEQTAPGKESTNPLMASILPKDMNPVQTGTRLAVPSDFLRPHQGIPIPQKSELSSTVVPLRAESGIQHPHINYYVVYNGPHAGIYDDWGCTKAATNGVPGVAHKKFATITEARAAADAYTTRQQTDRLNFIPKGEAQLKPKSFAEALTSPPKQKAHWLTLGTKKPSSDPAPKEISFAPEITMDDFLYLYDLVRKFDGEGDDTMFTTDNEKISLFNFRKNANPQMVREAYAAGLIKTIYPSNNLQEIKYLPKKVKDAVKRFRTNCIKNTEKDIFLKIRSTIPVWTIQGLLHKPRQVIEIGVSKKVIPTESKAMESRIQIEDLTELAVKTGEQFIQSLLRLNDKKKIFVNMVEHDTLVYSKNIKETDSEDQRAIETFQQRVISGNLLGFHCPAICHFIMKTVEKEGGAYKCHHCDKGKAIVQDASADEGTTDKSGPPPTRSIVEKEDVPNTSSKQVD.

The disordered stretch occupies residues 488-522 (DASADEGTTDKSGPPPTRSIVEKEDVPNTSSKQVD).

The protein belongs to the caulimoviridae viroplasmin family.

It localises to the host cytoplasm. Its function is as follows. Enhances the ribosomal termination-reinitiation event leading to the translation of major open reading frames on the polycistronic viral RNAs. The sequence is that of Transactivator/viroplasmin protein from Cauliflower mosaic virus (strain D/H) (CaMV).